The chain runs to 707 residues: MASVQKDPILQVETTCGSLLFELQIIWDEVGETETDRDQMLLELERECLEVYRRKVDQANRCRAQLRQAIADAEAQLAAICSAMGERPVHIRQSDQSVGSLKQELGRILPELEEMQKRKVERRNQFIVVMEQIDSITNDIKGQGELVHSEPLIDETNLSMRKLEELHCQLQVLQKEKIDRVETIRKHLCTLYSHCSVLGMDFNEVVGQVNPTLSDPEGPRSLSDHTIEKLGAAVQKLMEVKIQRMQRLQDLATTMLELWNLMDTPIEEQQEYQHITCNIAASEHEITEANSLSEDFIKYVEAEVVRLDEVKASKMKELVLKKRSELEEICRKTHLLPVSDSAIDQTIVAIESGIVDATMVLEHLEQHISKIKEEALSRKEILERVEKWLSACDEESWLEEYNRDDNRYNAGRGAHLTLKRAEKARNLVTKLPGMVEALASKTIVWEQENGIEFLYDGIRLLSMLEEYNILRQEREEEHRRQRDQKKLQGQLIAEQEALYGSKPSPSKPLGGKKAPRMSTGGASNRRLSLGAAMHQTPKPNKKADHRHNDGALSNGRRGLDIAGLPSRKQSMNPSEMLQSPLVRKPFSPISTTVVASKANIATTTTQQLPKNNAVNEISSFATPIKNNNILRNLEEEKMMTMMMQTPKNVAAMIPIPSTPATVSVPMHTAPTPFTNNARLMSEKPEVVEYSFEERRLAFMLQSECRLV.

5 coiled-coil regions span residues 49–84 (LEVYRRKVDQANRCRAQLRQAIADAEAQLAAICSAM), 157–179 (NLSMRKLEELHCQLQVLQKEKID), 269–289 (QQEYQHITCNIAASEHEITEA), 354–374 (IVDATMVLEHLEQHISKIKEE), and 464–486 (LEEYNILRQEREEEHRRQRDQKK). A disordered region spans residues 495–574 (QEALYGSKPS…PSRKQSMNPS (80 aa)). Over residues 500–512 (GSKPSPSKPLGGK) the composition is skewed to low complexity. Residues Ser504 and Ser528 each carry the phosphoserine modification.

It belongs to the MAP65/ASE1 family. In terms of assembly, forms a dimer. Binds to microtubules (MT) during cell division. Bundles polymerized MT via the formation of 25-nm crossbridges with centrally located endocytic MT, and midline phragmoplast MT. In terms of tissue distribution, expressed in all tissues enriched in dividing cells, such as the root and shoot apical meristem, foliar primordia, and young leaves, and embryos.

It localises to the nucleus. Its subcellular location is the cytoplasm. The protein resides in the cytoskeleton. The protein localises to the phragmoplast. Functionally, microtubule-associated protein that plays a critical role in organizing the mitotic microtubule array during both early and late mitosis in all plant organs. Essential for the cytokinesis, especially in roots, by maintaining the integrity of the overlapped microtubules in the phragmoplast. Required during root morphogenesis. Needed for giant cell development during root knot nematode infection, where cytokinesis is initiated but not completed. In Arabidopsis thaliana (Mouse-ear cress), this protein is 65-kDa microtubule-associated protein 3 (MAP65-3).